The chain runs to 96 residues: GTPase HRas (96 aa).

M1 bears the N-acetylmethionine mark. Residue T2 is modified to N-acetylthreonine; in GTPase HRas, N-terminally processed. 10-17 is a GTP binding site; that stretch reads GAGGVGKS. The Effector region signature appears at 32–40; sequence YDPTIEDSY. 57-61 lines the GTP pocket; the sequence is DTAGQ.

Belongs to the small GTPase superfamily. Ras family. As to quaternary structure, in its GTP-bound form interacts with PLCE1. Interacts with TBC1D10C. Interacts with RGL3. Interacts with HSPD1. Found in a complex with at least BRAF, HRAS, MAP2K1, MAPK3 and RGS14. Interacts (active GTP-bound form) with RGS14 (via RBD 1 domain). Forms a signaling complex with RASGRP1 and DGKZ. Interacts with RASSF5. Interacts with PDE6D. Interacts with IKZF3. Interacts with RACK1. Interacts with PIK3CG; the interaction is required for membrane recruitment and beta-gamma G protein dimer-dependent activation of the PI3K gamma complex PIK3CG:PIK3R6. Interacts with RAPGEF2. Interacts (active GTP-bound form) with both SHOC2 and PP1c (all isoforms) to form a tertiary complex; SHOC2 and PP1c preferably bind M-Ras/MRAS, but they also bind K-Ras/KRAS, N-Ras/NRAS and H-Ras/HRAS. Interacts (in GTP-bound form) with Oog1. Interacts (GTP-bound form) with MAPKAP1/SIN1; inhibiting H-Ras/HRAS activity. In terms of processing, ubiquitinated by the BCR(LZTR1) E3 ubiquitin ligase complex at Lys-170 in a non-degradative manner, leading to inhibit Ras signaling by decreasing Ras association with membranes.

Its subcellular location is the cell membrane. The protein localises to the golgi apparatus. It localises to the golgi apparatus membrane. The enzyme catalyses GTP + H2O = GDP + phosphate + H(+). With respect to regulation, alternates between an inactive form bound to GDP and an active form bound to GTP. Activated by a guanine nucleotide-exchange factor (GEF) and inactivated by a GTPase-activating protein (GAP). Its function is as follows. Ras proteins bind GDP/GTP and possess intrinsic GTPase activity. The sequence is that of GTPase HRas (HRAS) from Mesocricetus auratus (Golden hamster).